Reading from the N-terminus, the 165-residue chain is Serine/threonine-protein phosphatase 2A 56 kDa regulatory subunit epsilon isoform (165 aa).

Positions 1–41 are disordered; it reads MSSAPTTPPSVDKVDGFSRKSVRKARQKRSQSSSQFRSQGK. Ser2 carries the post-translational modification N-acetylserine. Phosphothreonine is present on Thr7. A compositionally biased stretch (basic residues) spans 20-29; sequence KSVRKARQKR. A phosphoserine mark is found at Ser30, Ser32, and Ser34. Positions 30–41 are enriched in low complexity; the sequence is SQSSSQFRSQGK.

It belongs to the phosphatase 2A regulatory subunit B56 family. As to quaternary structure, PP2A consists of a common heterodimeric core enzyme, composed of a 36 kDa catalytic subunit (subunit C) and a 65 kDa constant regulatory subunit (PR65 or subunit A), that associates with a variety of regulatory subunits. Proteins that associate with the core dimer include three families of regulatory subunits B (the R2/B/PR55/B55, R3/B''/PR72/PR130/PR59 and R5/B'/B56 families), the 48 kDa variable regulatory subunit, viral proteins, and cell signaling molecules. Interacts with SGO1. Found in a complex with at least ARL2, PPP2CB; PPP2R1A, PPP2R2A, PPP2R5E and TBCD. In terms of tissue distribution, highly expressed in testis, lung and brain.

Its subcellular location is the cytoplasm. In terms of biological role, the B regulatory subunit might modulate substrate selectivity and catalytic activity, and might also direct the localization of the catalytic enzyme to a particular subcellular compartment. The chain is Serine/threonine-protein phosphatase 2A 56 kDa regulatory subunit epsilon isoform (PPP2R5E) from Oryctolagus cuniculus (Rabbit).